The following is a 394-amino-acid chain: Na(+)/H(+) antiporter NhaA (394 aa).

11 consecutive transmembrane segments (helical) span residues 11 to 31 (LEAASGILLLVSALLAMIFAN), 59 to 79 (LLMWVNDGFMAVFFILVGMEV), 95 to 115 (IFPAVAALGGMIIPALVYWFI), 125 to 145 (GWAIPMATDIAFALGIVALLS), 155 to 175 (FLLALAIIDDLGAIIVIALFF), 177 to 197 (HEMSMQALTIASIAIVILVAM), 203 to 220 (TGLINYAIIGTILWASVL), 254 to 274 (ALAPWCSFAILPLFAFSNAGV), 296 to 316 (LIIGKPVGVFLFSYVAVLLGI), 328 to 348 (IFAIAVLCGIGFTMSMFIAGL), and 365 to 385 (LGILMGTFVAAIIGYFLLKIT).

The protein belongs to the NhaA Na(+)/H(+) (TC 2.A.33) antiporter family.

The protein localises to the cell inner membrane. It catalyses the reaction Na(+)(in) + 2 H(+)(out) = Na(+)(out) + 2 H(+)(in). Na(+)/H(+) antiporter that extrudes sodium in exchange for external protons. The sequence is that of Na(+)/H(+) antiporter NhaA from Actinobacillus pleuropneumoniae serotype 3 (strain JL03).